Reading from the N-terminus, the 3969-residue chain is MAHSCRWRFPARPGTTGGGGGGGRRGLGGAPRQRVPALLLPPGPPVGGGGPGAPPSPPAVAAAAAAAGSSGAGVPGGAAAASAASSSSASSSSSSSSSASSGPALLRVGPGFDAALQVSAAIGTNLRRFRAVFGESGGGGGSGEDEQFLGFGSDEEVRVRSPTRSPSVKTSPRKPRGRPRSGSDRNSAILSDPSVFSPLNKSETKSGDKIKKKDSKSIEKKRGRPPTFPGVKIKITHGKDISELPKGNKEDSLKKIKRTPSATFQQATKIKKLRAGKLSPLKSKFKTGKLQIGRKGVQIVRRRGRPPSTERIKTPSGLLINSELEKPQKVRKDKEGTPPLTKEDKTVVRQSPRRIKPVRIIPSSKRTDATIAKQLLQRAKKGAQKKIEKEAAQLQGRKVKTQVKNIRQFIMPVVSAISSRIIKTPRRFIEDEDYDPPIKIARLESTPNSRFSAPSCGSSEKSSAASQHSSQMSSDSSRSSSPSVDTSTDSQASEEIQVLPEERSDTPEVHPPLPISQSPENESNDRRSRRYSVSERSFGSRTTKKLSTLQSAPQQQTSSSPPPPLLTPPPPLQPASSISDHTPWLMPPTIPLASPFLPASTAPMQGKRKSILREPTFRWTSLKHSRSEPQYFSSAKYAKEGLIRKPIFDNFRPPPLTPEDVGFASGFSASGTAASARLFSPLHSGTRFDMHKRSPLLRAPRFTPSEAHSRIFESVTLPSNRTSAGTSSSGVSNRKRKRKVFSPIRSEPRSPSHSMRTRSGRLSSSELSPLTPPSSVSSSLSISVSPLATSALNPTFTFPSHSLTQSGESAEKNQRPRKQTSAPAEPFSSSSPTPLFPWFTPGSQTERGRNKDKAPEELSKDRDADKSVEKDKSRERDREREKENKRESRKEKRKKGSEIQSSSALYPVGRVSKEKVVGEDVATSSSAKKATGRKKSSSHDSGTDITSVTLGDTTAVKTKILIKKGRGNLEKTNLDLGPTAPSLEKEKTLCLSTPSSSTVKHSTSSIGSMLAQADKLPMTDKRVASLLKKAKAQLCKIEKSKSLKQTDQPKAQGQESDSSETSVRGPRIKHVCRRAAVALGRKRAVFPDDMPTLSALPWEEREKILSSMGNDDKSSIAGSEDAEPLAPPIKPIKPVTRNKAPQEPPVKKGRRSRRCGQCPGCQVPEDCGVCTNCLDKPKFGGRNIKKQCCKMRKCQNLQWMPSKAYLQKQAKAVKKKEKKSKTSEKKDSKESSVVKNVVDSSQKPTPSAREDPAPKKSSSEPPPRKPVEEKSEEGNVSAPGPESKQATTPASRKSSKQVSQPALVIPPQPPTTGPPRKEVPKTTPSEPKKKQPPPPESGPEQSKQKKVAPRPSIPVKQKPKEKEKPPPVNKQENAGTLNILSTLSNGNSSKQKIPADGVHRIRVDFKEDCEAENVWEMGGLGILTSVPITPRVVCFLCASSGHVEFVYCQVCCEPFHKFCLEENERPLEDQLENWCCRRCKFCHVCGRQHQATKQLLECNKCRNSYHPECLGPNYPTKPTKKKKVWICTKCVRCKSCGSTTPGKGWDAQWSHDFSLCHDCAKLFAKGNFCPLCDKCYDDDDYESKMMQCGKCDRWVHSKCENLSDEMYEILSNLPESVAYTCVNCTERHPAEWRLALEKELQISLKQVLTALLNSRTTSHLLRYRQAAKPPDLNPETEESIPSRSSPEGPDPPVLTEVSKQDDQQPLDLEGVKRKMDQGNYTSVLEFSDDIVKIIQAAINSDGGQPEIKKANSMVKSFFIRQMERVFPWFSVKKSRFWEPNKVSSNSGMLPNAVLPPSLDHNYAQWQEREENSHTEQPPLMKKIIPAPKPKGPGEPDSPTPLHPPTPPILSTDRSREDSPELNPPPGIEDNRQCALCLTYGDDSANDAGRLLYIGQNEWTHVNCALWSAEVFEDDDGSLKNVHMAVIRGKQLRCEFCQKPGATVGCCLTSCTSNYHFMCSRAKNCVFLDDKKVYCQRHRDLIKGEVVPENGFEVFRRVFVDFEGISLRRKFLNGLEPENIHMMIGSMTIDCLGILNDLSDCEDKLFPIGYQCSRVYWSTTDARKRCVYTCKIVECRPPVVEPDINSTVEHDENRTIAHSPTSFTESSSKESQNTAEIISPPSPDRPPHSQTSGSCYYHVISKVPRIRTPSYSPTQRSPGCRPLPSAGSPTPTTHEIVTVGDPLLSSGLRSIGSRRHSTSSLSPQRSKLRIMSPMRTGNTYSRNNVSSVSTTGTATDLESSAKVVDHVLGPLNSSTSLGQNTSTSSNLQRTVVTVGNKNSHLDGSSSSEMKQSSASDLVSKSSSLKGEKTKVLSSKSSEGSAHNVAYPGIPKLAPQVHNTTSRELNVSKIGSFAEPSSVSFSSKEALSFPHLHLRGQRNDRDQHTDSTQSANSSPDEDTEVKTLKLSGMSNRSSIINEHMGSSSRDRRQKGKKSCKETFKEKHSSKSFLEPGQVTTGEEGNLKPEFMDEVLTPEYMGQRPCNNVSSDKIGDKGLSMPGVPKAPPMQVEGSAKELQAPRKRTVKVTLTPLKMENESQSKNALKESSPASPLQIESTSPTEPISASENPGDGPVAQPSPNNTSCQDSQSNNYQNLPVQDRNLMLPDGPKPQEDGSFKRRYPRRSARARSNMFFGLTPLYGVRSYGEEDIPFYSSSTGKKRGKRSAEGQVDGADDLSTSDEDDLYYYNFTRTVISSGGEERLASHNLFREEEQCDLPKISQLDGVDDGTESDTSVTATTRKSSQIPKRNGKENGTENLKIDRPEDAGEKEHVTKSSVGHKNEPKMDNCHSVSRVKTQGQDSLEAQLSSLESSRRVHTSTPSDKNLLDTYNTELLKSDSDNNNSDDCGNILPSDIMDFVLKNTPSMQALGESPESSSSELLNLGEGLGLDSNREKDMGLFEVFSQQLPTTEPVDSSVSSSISAEEQFELPLELPSDLSVLTTRSPTVPSQNPSRLAVISDSGEKRVTITEKSVASSESDPALLSPGVDPTPEGHMTPDHFIQGHMDADHISSPPCGSVEQGHGNNQDLTRNSSTPGLQVPVSPTVPIQNQKYVPNSTDSPGPSQISNAAVQTTPPHLKPATEKLIVVNQNMQPLYVLQTLPNGVTQKIQLTSSVSSTPSVMETNTSVLGPMGGGLTLTTGLNPSLPTSQSLFPSASKGLLPMSHHQHLHSFPAATQSSFPPNISNPPSGLLIGVQPPPDPQLLVSESSQRTDLSTTVATPSSGLKKRPISRLQTRKNKKLAPSSTPSNIAPSDVVSNMTLINFTPSQLPNHPSLLDLGSLNTSSHRTVPNIIKRSKSSIMYFEPAPLLPQSVGGTAATAAGTSTISQDTSHLTSGSVSGLASSSSVLNVVSMQTTTTPTSSASVPGHVTLTNPRLLGTPDIGSISNLLIKASQQSLGIQDQPVALPPSSGMFPQLGTSQTPSTAAITAASSICVLPSTQTTGITAASPSGEADEHYQLQHVNQLLASKTGIHSSQRDLDSASGPQVSNFTQTVDAPNSMGLEQNKALSSAVQASPTSPGGSPSSPSSGQRSASPSVPGPTKPKPKTKRFQLPLDKGNGKKHKVSHLRTSSSEAHIPDQETTSLTSGTGTPGAEAEQQDTASVEQSSQKECGQPAGQVAVLPEVQVTQNPANEQESAEPKTVEEEESNFSSPLMLWLQQEQKRKESITEKKPKKGLVFEISSDDGFQICAESIEDAWKSLTDKVQEARSNARLKQLSFAGVNGLRMLGILHDAVVFLIEQLSGAKHCRNYKFRFHKPEEANEPPLNPHGSARAEVHLRKSAFDMFNFLASKHRQPPEYNPNDEEEEEVQLKSARRATSMDLPMPMRFRHLKKTSKEAVGVYRSPIHGRGLFCKRNIDAGEMVIEYAGNVIRSIQTDKREKYYDSKGIGCYMFRIDDSEVVDATMHGNAARFINHSCEPNCYSRVINIDGQKHIVIFAMRKIYRGEELTYDYKFPIEDASNKLPCNCGAKKCRKFLN.

Disordered regions lie at residues 1-108 (MAHS…LLRV), 132-253 (VFGE…EDSL), and 301-352 (RRRG…RQSP). The short motif at 6 to 25 (RWRFPARPGTTGGGGGGGRR) is the Menin-binding motif (MBM) element. Residues 15–29 (TTGGGGGGGRRGLGG) are compositionally biased toward gly residues. 2 stretches are compositionally biased toward low complexity: residues 59–69 (AVAAAAAAAGS) and 77–104 (GAAA…SGPA). The Integrase domain-binding motif 1 (IBM1) signature appears at 123–134 (GTNLRRFRAVFG). A phosphoserine; by CK2 mark is found at Ser136 and Ser142. The short motif at 147 to 152 (QFLGFG) is the Integrase domain-binding motif 2 (IBM2) element. At Ser153 the chain carries Phosphoserine. Positions 169 to 180 (KTSPRKPRGRPR) form a DNA-binding region, a.T hook 1. Position 197 is a phosphoserine (Ser197). Basic and acidic residues-rich tracts occupy residues 202–220 (SETK…SIEK) and 237–253 (HGKD…EDSL). A DNA-binding region (a.T hook 2) is located at residues 217–227 (SIEKKRGRPPT). Lys239 carries the post-translational modification N6-acetyllysine. The a.T hook 3 DNA-binding region spans 301-309 (RRRGRPPST). Residues 323-347 (ELEKPQKVRKDKEGTPPLTKEDKTV) are compositionally biased toward basic and acidic residues. Lys373 bears the N6-acetyllysine mark. The interval 445–585 (STPNSRFSAP…SSISDHTPWL (141 aa)) is disordered. Over residues 452-491 (SAPSCGSSEKSSAASQHSSQMSSDSSRSSSPSVDTSTDSQ) the composition is skewed to low complexity. Ser518 is modified (phosphoserine). A compositionally biased stretch (low complexity) spans 546–559 (LSTLQSAPQQQTSS). Residues 560 to 573 (SPPPPLLTPPPPLQ) show a composition bias toward pro residues. The residue at position 636 (Lys636) is an N6-acetyllysine. A Phosphoserine modification is found at Ser680. Disordered stretches follow at residues 713-780 (ESVT…SSSL), 798-949 (FPSH…TSVT), 1038-1066 (EKSK…VRGP), and 1106-1166 (SSMG…VPED). Positions 716-732 (TLPSNRTSAGTSSSGVS) are enriched in polar residues. Residues 762 to 780 (LSSSELSPLTPPSSVSSSL) are compositionally biased toward low complexity. Positions 798–808 (FPSHSLTQSGE) are enriched in polar residues. Residues 820 to 841 (TSAPAEPFSSSSPTPLFPWFTP) show a composition bias toward low complexity. Residue Thr840 is modified to Phosphothreonine. Positions 846-890 (ERGRNKDKAPEELSKDRDADKSVEKDKSRERDREREKENKRESRK) are enriched in basic and acidic residues. Ser926 and Ser1056 each carry phosphoserine. The span at 1043–1062 (LKQTDQPKAQGQESDSSETS) shows a compositional bias: polar residues. N6-acetyllysine is present on Lys1130. The CXXC-type zinc finger occupies 1147–1195 (KKGRRSRRCGQCPGCQVPEDCGVCTNCLDKPKFGGRNIKKQCCKMRKCQ). Zn(2+) is bound by residues Cys1155, Cys1158, Cys1161, Cys1167, Cys1170, Cys1173, Cys1189, and Cys1194. Residues 1200–1375 (MPSKAYLQKQ…PPVNKQENAG (176 aa)) are disordered. Basic and acidic residues predominate over residues 1220–1232 (SKTSEKKDSKESS). A compositionally biased stretch (low complexity) spans 1233–1243 (VVKNVVDSSQK). Lys1235 carries the N6-acetyllysine modification. The span at 1248 to 1273 (AREDPAPKKSSSEPPPRKPVEEKSEE) shows a compositional bias: basic and acidic residues. Polar residues predominate over residues 1284 to 1300 (KQATTPASRKSSKQVSQ). Residues 1304–1313 (VIPPQPPTTG) show a composition bias toward pro residues. 3 PHD-type zinc fingers span residues 1431-1482 (RVVC…CKFC), 1479-1533 (CKFC…CVRC), and 1566-1627 (GNFC…CTER). Residues 1584 to 1600 (KMMQCGKCDRWVHSKCE) form an interaction with histone H3K4me3 region. The 131-residue stretch at 1635–1765 (ALEKELQISL…SFFIRQMERV (131 aa)) folds into the Bromo domain. Disordered regions lie at residues 1663-1713 (YRQA…GVKR) and 1806-1869 (QERE…GIED). Residues 1826-1847 (APKPKGPGEPDSPTPLHPPTPP) are compositionally biased toward pro residues. Phosphoserine is present on Ser1837. Position 1845 is a phosphothreonine (Thr1845). At Ser1858 the chain carries Phosphoserine. Residues 1870-1910 (NRQCALCLTYGDDSANDAGRLLYIGQNEWTHVNCALWSAEV) form a C2HC pre-PHD-type zinc finger. A PHD-type 4 zinc finger spans residues 1931–1978 (LRCEFCQKPGATVGCCLTSCTSNYHFMCSRAKNCVFLDDKKVYCQRHR). The FYR N-terminal domain maps to 2018–2074 (NIHMMIGSMTIDCLGILNDLSDCEDKLFPIGYQCSRVYWSTTDARKRCVYTCKIVEC). 7 disordered regions span residues 2081-2133 (PDIN…TSGS), 2145-2232 (IRTP…TTGT), 2275-2333 (NKNS…KLAP), 2373-2460 (RGQR…EGNL), 2475-2618 (GQRP…RYPR), 2647-2675 (FYSS…STSD), and 2713-2821 (KISQ…KNLL). The span at 2095 to 2115 (IAHSPTSFTESSSKESQNTAE) shows a compositional bias: polar residues. Position 2098 is a phosphoserine (Ser2098). Thr2147 bears the Phosphothreonine mark. A phosphoserine mark is found at Ser2151 and Ser2201. Residues 2214–2232 (RTGNTYSRNNVSSVSTTGT) show a composition bias toward polar residues. A compositionally biased stretch (low complexity) spans 2283–2302 (SSSSEMKQSSASDLVSKSSS). Polar residues-rich tracts occupy residues 2310 to 2319 (VLSSKSSEGS) and 2406 to 2421 (GMSN…MGSS). Over residues 2432–2442 (SCKETFKEKHS) the composition is skewed to basic and acidic residues. Phosphothreonine is present on Thr2525. Residue Lys2528 forms a Glycyl lysine isopeptide (Lys-Gly) (interchain with G-Cter in SUMO2) linkage. Composition is skewed to polar residues over residues 2543-2563 (SPAS…SASE) and 2573-2592 (PSPN…QNLP). Position 2611 is a phosphoserine (Ser2611). The span at 2726–2741 (SDTSVTATTRKSSQIP) shows a compositional bias: polar residues. Residues 2744-2782 (NGKENGTENLKIDRPEDAGEKEHVTKSSVGHKNEPKMDN) are compositionally biased toward basic and acidic residues. A compositionally biased stretch (polar residues) spans 2784-2795 (HSVSRVKTQGQD). Ser2796 is modified (phosphoserine). The span at 2796–2805 (SLEAQLSSLE) shows a compositional bias: low complexity. Positions 2812–2821 (TSTPSDKNLL) are enriched in polar residues. The short motif at 2847–2855 (SDIMDFVLK) is the 9aaTAD element. Ser2955 carries the phosphoserine modification. Lys2958 is modified (N6-acetyllysine). Disordered regions lie at residues 2961–3064 (TITE…NAAV) and 3166–3244 (PAAT…SNIA). Composition is skewed to polar residues over residues 2963–2972 (TEKSVASSES) and 3016–3030 (HGNN…STPG). Residue Ser3036 is modified to Phosphoserine. A compositionally biased stretch (polar residues) spans 3039-3064 (VPIQNQKYVPNSTDSPGPSQISNAAV). A compositionally biased stretch (low complexity) spans 3171-3182 (SSFPPNISNPPS). Positions 3198–3216 (VSESSQRTDLSTTVATPSS) are enriched in polar residues. Positions 3218-3233 (LKKRPISRLQTRKNKK) are enriched in basic residues. Position 3372 is a phosphothreonine (Thr3372). An N6-acetyllysine modification is found at Lys3462. Disordered stretches follow at residues 3464–3608 (GIHS…GQPA) and 3620–3643 (TQNP…SNFS). A compositionally biased stretch (polar residues) spans 3476 to 3489 (SGPQVSNFTQTVDA). Over residues 3508–3529 (SPTSPGGSPSSPSSGQRSASPS) the composition is skewed to low complexity. Phosphoserine is present on residues Ser3511, Ser3515, and Ser3527. Positions 3591–3603 (QDTASVEQSSQKE) are enriched in polar residues. Positions 3666–3747 (KKGLVFEISS…KHCRNYKFRF (82 aa)) constitute an FYR C-terminal domain. The WDR5 interaction motif (WIN) motif lies at 3762–3767 (GSARAE). The interval 3785–3808 (HRQPPEYNPNDEEEEEVQLKSARR) is disordered. One can recognise an SET domain in the interval 3829–3945 (EAVGVYRSPI…RGEELTYDYK (117 aa)). The S-adenosyl-L-methionine site is built by His3839 and Arg3841. Cys3882 is modified (S-methylcysteine; by autocatalysis). S-adenosyl-L-methionine contacts are provided by residues Tyr3883 and 3906 to 3907 (NH). Residues Cys3909 and Cys3957 each coordinate Zn(2+). The Post-SET domain maps to 3953–3969 (NKLPCNCGAKKCRKFLN). An S-adenosyl-L-methionine-binding site is contributed by Asn3958. Cys3959 and Cys3964 together coordinate Zn(2+).

It belongs to the class V-like SAM-binding methyltransferase superfamily. Histone-lysine methyltransferase family. TRX/MLL subfamily. MLL cleavage product N320 heterodimerizes with MLL cleavage product C180 (via SET and FYRC domains). Component of some MLL1/MLL complex, at least composed of the core components KMT2A/MLL1, ASH2L, HCFC1/HCF1, HCFC2, WDR5, DPY30 and RBBP5, as well as the facultative components BACC1, CHD8, E2F6, HSP70, INO80C, KANSL1, LAS1L, MAX, MCRS1, MEN1, MGA, KAT8/MOF, PELP1, PHF20, PRP31, RING2, RUVB1/TIP49A, RUVB2/TIP49B, SENP3, TAF1, TAF4, TAF6, TAF7, TAF9 and TEX10. Forms a core complex with the evolutionary conserved subcomplex WRAD composed of WDR5, RBBP5, ASH2L/ASH2 and DPY30 subunits; WRAD differentially stimulates the methyltransferase activity. Interacts (via WIN motif) with WDR5; the interaction is direct. Interaction with WDR5 is required for stable interaction with ASH2L and RBBP5, and thereby also for optimal histone methyltransferase activity. Interacts with KAT8/MOF; the interaction is direct. Interacts with SBF1 and PPP1R15A. Interacts with ZNF335. Interacts with CLOCK and BMAL1 in a circadian manner. Interacts with PPIE; this results in decreased histone H3 methyltransferase activity. Interacts with CREBBP. Interacts with the WRAD complex composed of WDR5, RBBP5, ASH2L and DPY30. Interacts (via MBM motif) with MEN1. Interacts (via IBM motifs) with PSIP1 (via IBD domain) with moderate affinity whereas the KMT2A-MEN1 complex interacts with a greater affinity; MEN1 enhances interaction of KMT2A with PSIP1. Phosphorylation increases its affinity for PSIP1. Forms a complex with CREBBP and CREB1. In terms of assembly, (Microbial infection) Interacts with herpes virus 8/HHV-8 protein LANA1; this interaction regulates the MLL1 histone methyltransferase activity on viral DNA. Proteolytic cleavage by TASP1 generates MLL cleavage product N320 and MLL cleavage product C180, which reassemble through a non-covalent association. 2 cleavage sites exist, cleavage site 1 (CS1) and cleavage site 2 (CS2), to generate MLL cleavage products N320 and C180. CS2 is the major site. In terms of processing, phosphorylation increases its interaction with PSIP1. Post-translationally, auto-methylated at Cys-3882: auto-methylation is inhibited by the WRAD complex and unmodified histone H3. As to expression, heart, lung, brain and T- and B-lymphocytes.

Its subcellular location is the nucleus. It carries out the reaction L-lysyl(4)-[histone H3] + S-adenosyl-L-methionine = N(6)-methyl-L-lysyl(4)-[histone H3] + S-adenosyl-L-homocysteine + H(+). It catalyses the reaction N(6)-methyl-L-lysyl(4)-[histone H3] + S-adenosyl-L-methionine = N(6),N(6)-dimethyl-L-lysyl(4)-[histone H3] + S-adenosyl-L-homocysteine + H(+). The enzyme catalyses L-cysteinyl-[protein] + S-adenosyl-L-methionine = S-methyl-L-cysteinyl-[protein] + S-adenosyl-L-homocysteine + H(+). Its function is as follows. Histone methyltransferase that plays an essential role in early development and hematopoiesis. Catalytic subunit of the MLL1/MLL complex, a multiprotein complex that mediates both methylation of 'Lys-4' of histone H3 (H3K4me) complex and acetylation of 'Lys-16' of histone H4 (H4K16ac). Catalyzes methyl group transfer from S-adenosyl-L-methionine to the epsilon-amino group of 'Lys-4' of histone H3 (H3K4) via a non-processive mechanism. Part of chromatin remodeling machinery predominantly forms H3K4me1 and H3K4me2 methylation marks at active chromatin sites where transcription and DNA repair take place. Has weak methyltransferase activity by itself, and requires other component of the MLL1/MLL complex to obtain full methyltransferase activity. Has no activity toward histone H3 phosphorylated on 'Thr-3', less activity toward H3 dimethylated on 'Arg-8' or 'Lys-9', while it has higher activity toward H3 acetylated on 'Lys-9'. Binds to unmethylated CpG elements in the promoter of target genes and helps maintain them in the nonmethylated state. Required for transcriptional activation of HOXA9. Promotes PPP1R15A-induced apoptosis. Plays a critical role in the control of circadian gene expression and is essential for the transcriptional activation mediated by the CLOCK-BMAL1 heterodimer. Establishes a permissive chromatin state for circadian transcription by mediating a rhythmic methylation of 'Lys-4' of histone H3 (H3K4me) and this histone modification directs the circadian acetylation at H3K9 and H3K14 allowing the recruitment of CLOCK-BMAL1 to chromatin. Also has auto-methylation activity on Cys-3882 in absence of histone H3 substrate. This chain is Histone-lysine N-methyltransferase 2A (KMT2A), found in Homo sapiens (Human).